The primary structure comprises 547 residues: Chaperonin GroEL (547 aa).

ATP-binding positions include threonine 30–proline 33, lysine 51, aspartate 87–threonine 91, glycine 415, and aspartate 496. The interval lysine 525–methionine 547 is disordered. The segment covering glycine 533–methionine 547 has biased composition (gly residues).

It belongs to the chaperonin (HSP60) family. Forms a cylinder of 14 subunits composed of two heptameric rings stacked back-to-back. Interacts with the co-chaperonin GroES.

It is found in the cytoplasm. The catalysed reaction is ATP + H2O + a folded polypeptide = ADP + phosphate + an unfolded polypeptide.. Together with its co-chaperonin GroES, plays an essential role in assisting protein folding. The GroEL-GroES system forms a nano-cage that allows encapsulation of the non-native substrate proteins and provides a physical environment optimized to promote and accelerate protein folding. This Cereibacter sphaeroides (strain ATCC 17029 / ATH 2.4.9) (Rhodobacter sphaeroides) protein is Chaperonin GroEL.